The chain runs to 293 residues: Glutamyl-Q tRNA(Asp) synthetase (293 aa).

L-glutamate is bound by residues 26 to 30 (RYAPS) and aspartate 62. The short motif at 29-39 (PSPTGALHLGN) is the 'HIGH' region element. Cysteine 118, cysteine 120, tyrosine 131, and cysteine 135 together coordinate Zn(2+). Residues tyrosine 178 and arginine 196 each coordinate L-glutamate. The short motif at 234–238 (KLSKR) is the 'KMSKS' region element. Lysine 237 serves as a coordination point for ATP.

Belongs to the class-I aminoacyl-tRNA synthetase family. GluQ subfamily. Zn(2+) is required as a cofactor.

Its function is as follows. Catalyzes the tRNA-independent activation of glutamate in presence of ATP and the subsequent transfer of glutamate onto a tRNA(Asp). Glutamate is transferred on the 2-amino-5-(4,5-dihydroxy-2-cyclopenten-1-yl) moiety of the queuosine in the wobble position of the QUC anticodon. In Parasynechococcus marenigrum (strain WH8102), this protein is Glutamyl-Q tRNA(Asp) synthetase.